Consider the following 116-residue polypeptide: Non-specific lipid-transfer protein 5 (116 aa).

Positions 1–24 (MARSMKLACVVLVMCMIVAPMAEG) are cleaved as a signal peptide. Intrachain disulfides connect cysteine 28–cysteine 75, cysteine 38–cysteine 52, cysteine 53–cysteine 98, and cysteine 73–cysteine 112.

This sequence belongs to the plant LTP family.

Plant non-specific lipid-transfer proteins transfer phospholipids as well as galactolipids across membranes. May play a role in wax or cutin deposition in the cell walls of expanding epidermal cells and certain secretory tissues. The protein is Non-specific lipid-transfer protein 5 of Lens culinaris (Lentil).